The primary structure comprises 352 residues: Protein RecA (352 aa).

65-72 (GPESSGKT) lines the ATP pocket.

This sequence belongs to the RecA family.

It localises to the cytoplasm. Its function is as follows. Can catalyze the hydrolysis of ATP in the presence of single-stranded DNA, the ATP-dependent uptake of single-stranded DNA by duplex DNA, and the ATP-dependent hybridization of homologous single-stranded DNAs. It interacts with LexA causing its activation and leading to its autocatalytic cleavage. The sequence is that of Protein RecA from Pseudomonas fluorescens (strain SBW25).